A 168-amino-acid polypeptide reads, in one-letter code: Endoribonuclease YbeY (168 aa).

Residues His-119, His-123, and His-129 each coordinate Zn(2+).

It belongs to the endoribonuclease YbeY family. It depends on Zn(2+) as a cofactor.

Its subcellular location is the cytoplasm. In terms of biological role, single strand-specific metallo-endoribonuclease involved in late-stage 70S ribosome quality control and in maturation of the 3' terminus of the 16S rRNA. The chain is Endoribonuclease YbeY from Gluconobacter oxydans (strain 621H) (Gluconobacter suboxydans).